Reading from the N-terminus, the 154-residue chain is Deoxyuridine 5'-triphosphate nucleotidohydrolase (154 aa).

Substrate is bound by residues 72 to 74, Asn85, 89 to 91, and Met99; these read RSG and LID.

This sequence belongs to the dUTPase family. Mg(2+) serves as cofactor.

It catalyses the reaction dUTP + H2O = dUMP + diphosphate + H(+). It participates in pyrimidine metabolism; dUMP biosynthesis; dUMP from dCTP (dUTP route): step 2/2. Its function is as follows. This enzyme is involved in nucleotide metabolism: it produces dUMP, the immediate precursor of thymidine nucleotides and it decreases the intracellular concentration of dUTP so that uracil cannot be incorporated into DNA. The polypeptide is Deoxyuridine 5'-triphosphate nucleotidohydrolase (Psychrobacter cryohalolentis (strain ATCC BAA-1226 / DSM 17306 / VKM B-2378 / K5)).